Reading from the N-terminus, the 250-residue chain is Purine nucleoside phosphorylase BQ2027_MB2173C (250 aa).

3 residues coordinate Zn(2+): histidine 77, cysteine 114, and histidine 131.

The protein belongs to the purine nucleoside phosphorylase YfiH/LACC1 family. In terms of assembly, homodimer. Cu(2+) is required as a cofactor. Zn(2+) serves as cofactor.

It catalyses the reaction adenosine + phosphate = alpha-D-ribose 1-phosphate + adenine. It carries out the reaction S-methyl-5'-thioadenosine + phosphate = 5-(methylsulfanyl)-alpha-D-ribose 1-phosphate + adenine. The catalysed reaction is inosine + phosphate = alpha-D-ribose 1-phosphate + hypoxanthine. The enzyme catalyses adenosine + H2O + H(+) = inosine + NH4(+). Purine nucleoside enzyme that catalyzes the phosphorolysis of adenosine and inosine nucleosides, yielding D-ribose 1-phosphate and the respective free bases, adenine and hypoxanthine. Also catalyzes the phosphorolysis of S-methyl-5'-thioadenosine into adenine and S-methyl-5-thio-alpha-D-ribose 1-phosphate. Also has adenosine deaminase activity. The protein is Purine nucleoside phosphorylase BQ2027_MB2173C of Mycobacterium bovis (strain ATCC BAA-935 / AF2122/97).